Consider the following 204-residue polypeptide: NAD(P)H dehydrogenase (quinone) FQR1 (204 aa).

One can recognise a Flavodoxin-like domain in the interval 5 to 192 (VYIVYYSMYG…QQAFHQGQYI (188 aa)). Residues 11 to 15 (SMYGH), 112 to 165 (IFYS…SPYG), and His-136 contribute to the FMN site. An NAD(+)-binding site is contributed by Tyr-13.

This sequence belongs to the WrbA family. It depends on FMN as a cofactor.

It is found in the cell membrane. The catalysed reaction is a quinone + NADH + H(+) = a quinol + NAD(+). It catalyses the reaction a quinone + NADPH + H(+) = a quinol + NADP(+). Its function is as follows. Catalyzes the transfer of electrons from NADH and NADPH to several quinones in vitro. May act as detoxification enzyme, and protect against auxin-induced oxidative stress. The chain is NAD(P)H dehydrogenase (quinone) FQR1 from Arabidopsis thaliana (Mouse-ear cress).